Here is a 272-residue protein sequence, read N- to C-terminus: GTP cyclohydrolase FolE2 (272 aa).

It belongs to the GTP cyclohydrolase IV family.

The catalysed reaction is GTP + H2O = 7,8-dihydroneopterin 3'-triphosphate + formate + H(+). It functions in the pathway cofactor biosynthesis; 7,8-dihydroneopterin triphosphate biosynthesis; 7,8-dihydroneopterin triphosphate from GTP: step 1/1. In terms of biological role, converts GTP to 7,8-dihydroneopterin triphosphate. The protein is GTP cyclohydrolase FolE2 of Aromatoleum aromaticum (strain DSM 19018 / LMG 30748 / EbN1) (Azoarcus sp. (strain EbN1)).